Consider the following 495-residue polypeptide: Bifunctional protein GlmU (495 aa).

The tract at residues 1-241 (MTFPGDTAVL…SALVAGVNNR (241 aa)) is pyrophosphorylase. UDP-N-acetyl-alpha-D-glucosamine contacts are provided by residues 12–15 (LAAG), K26, Q83, 88–89 (GT), 112–114 (SGD), G151, E166, N181, and N239. A Mg(2+)-binding site is contributed by D114. Residue N239 coordinates Mg(2+). The interval 242-262 (VQLAQLASELNRRVVAAHQLA) is linker. Residues 263 to 495 (GVTVVDPATT…TQPPDADQTP (233 aa)) form an N-acetyltransferase region. R344 and K362 together coordinate UDP-N-acetyl-alpha-D-glucosamine. Catalysis depends on H374, which acts as the Proton acceptor. Positions 377 and 388 each coordinate UDP-N-acetyl-alpha-D-glucosamine. Acetyl-CoA contacts are provided by residues A391, 397-398 (NY), S416, and A434. Positions 457–495 (IENWVQRKRPGSPAAQASKRASEMACQQPTQPPDADQTP) are disordered. The span at 483-495 (QQPTQPPDADQTP) shows a compositional bias: low complexity.

This sequence in the N-terminal section; belongs to the N-acetylglucosamine-1-phosphate uridyltransferase family. It in the C-terminal section; belongs to the transferase hexapeptide repeat family. Homotrimer. The cofactor is Mg(2+).

Its subcellular location is the cytoplasm. It catalyses the reaction alpha-D-glucosamine 1-phosphate + acetyl-CoA = N-acetyl-alpha-D-glucosamine 1-phosphate + CoA + H(+). The catalysed reaction is N-acetyl-alpha-D-glucosamine 1-phosphate + UTP + H(+) = UDP-N-acetyl-alpha-D-glucosamine + diphosphate. It functions in the pathway nucleotide-sugar biosynthesis; UDP-N-acetyl-alpha-D-glucosamine biosynthesis; N-acetyl-alpha-D-glucosamine 1-phosphate from alpha-D-glucosamine 6-phosphate (route II): step 2/2. It participates in nucleotide-sugar biosynthesis; UDP-N-acetyl-alpha-D-glucosamine biosynthesis; UDP-N-acetyl-alpha-D-glucosamine from N-acetyl-alpha-D-glucosamine 1-phosphate: step 1/1. The protein operates within bacterial outer membrane biogenesis; LPS lipid A biosynthesis. Catalyzes the last two sequential reactions in the de novo biosynthetic pathway for UDP-N-acetylglucosamine (UDP-GlcNAc). The C-terminal domain catalyzes the transfer of acetyl group from acetyl coenzyme A to glucosamine-1-phosphate (GlcN-1-P) to produce N-acetylglucosamine-1-phosphate (GlcNAc-1-P), which is converted into UDP-GlcNAc by the transfer of uridine 5-monophosphate (from uridine 5-triphosphate), a reaction catalyzed by the N-terminal domain. The polypeptide is Bifunctional protein GlmU (Mycobacterium bovis (strain ATCC BAA-935 / AF2122/97)).